The chain runs to 332 residues: Malate dehydrogenase, cytoplasmic (332 aa).

NAD(+) contacts are provided by residues 16 to 17 (QI), D43, and G90. Oxaloacetate is bound at residue R99. Q113 and N132 together coordinate NAD(+). N132, R163, H188, and S243 together coordinate oxaloacetate. The active-site Proton acceptor is the H188.

The protein belongs to the LDH/MDH superfamily. MDH type 2 family. In terms of assembly, homodimer.

Its subcellular location is the cytoplasm. It carries out the reaction (S)-malate + NAD(+) = oxaloacetate + NADH + H(+). The sequence is that of Malate dehydrogenase, cytoplasmic (CMDH) from Medicago sativa (Alfalfa).